A 98-amino-acid chain; its full sequence is Co-chaperonin GroES (98 aa).

This sequence belongs to the GroES chaperonin family. In terms of assembly, heptamer of 7 subunits arranged in a ring. Interacts with the chaperonin GroEL.

It is found in the cytoplasm. Its function is as follows. Together with the chaperonin GroEL, plays an essential role in assisting protein folding. The GroEL-GroES system forms a nano-cage that allows encapsulation of the non-native substrate proteins and provides a physical environment optimized to promote and accelerate protein folding. GroES binds to the apical surface of the GroEL ring, thereby capping the opening of the GroEL channel. The sequence is that of Co-chaperonin GroES from Renibacterium salmoninarum (strain ATCC 33209 / DSM 20767 / JCM 11484 / NBRC 15589 / NCIMB 2235).